The chain runs to 451 residues: DNA double-strand break repair nuclease NurA (451 aa).

The Mn(2+) site is built by aspartate 51 and aspartate 126.

It belongs to the NurA family. In terms of assembly, homodimer. Interacts with HerA. Requires Mn(2+) as cofactor.

Exonuclease activity is stimulated in the presence of HerA. Its function is as follows. Involved in DNA double-strand break (DSB) repair. Probably acts with HerA to stimulate resection of the 5' strand and produce the long 3' single-strand that is required for RadA loading. Exhibits 5' endonuclease activity and both 5' and 3' exonuclease activities. This is DNA double-strand break repair nuclease NurA from Pyrococcus furiosus (strain ATCC 43587 / DSM 3638 / JCM 8422 / Vc1).